The primary structure comprises 294 residues: uncharacterized protein (294 aa).

This is an uncharacterized protein from Mycoplasma pneumoniae (strain ATCC 29342 / M129 / Subtype 1) (Mycoplasmoides pneumoniae).